Here is a 480-residue protein sequence, read N- to C-terminus: Thyroid receptor-interacting protein 6 (480 aa).

Positions Met-1–Pro-12 are enriched in pro residues. The disordered stretch occupies residues Met-1–Arg-43. The residue at position 25 (Arg-25) is an Asymmetric dimethylarginine; alternate. Arg-25 bears the Omega-N-methylarginine; alternate mark. Tyr-55 carries the phosphotyrosine; by SRC modification. Residues Pro-57–Asp-84 form a disordered region. Ser-92 carries the phosphoserine modification. A disordered region spans residues Leu-107–Gly-134. Positions Asp-108 to Ala-122 are enriched in basic and acidic residues. Omega-N-methylarginine is present on residues Arg-111, Arg-183, and Arg-190. The residue at position 193 (Ser-193) is a Phosphoserine. Residues Arg-209 and Arg-242 each carry the omega-N-methylarginine modification. The segment at Arg-218–Glu-257 is disordered. Residues Ala-238–Glu-247 are compositionally biased toward gly residues. LIM zinc-binding domains follow at residues Gly-281–Thr-339, Glu-341–Pro-401, and Ser-404–Glu-471. The interval Ser-473–Cys-480 is interaction with MAGI1 and PTPN13.

This sequence belongs to the zyxin/ajuba family. As to quaternary structure, specifically interacts with the ligand binding domain of the thyroid receptor (TR) in the presence of thyroid hormone. Interacts (via the third LIM domain and C-terminus) with PTPN13 (via the second PDZ domain). Interacts (via the second LIM domain or via the third LIM domain plus C-terminus) with PDLIM4 (via PDZ domain). Found in a complex with PTPN13 and PDLIM4. Interacts with SVIL isoform 2. Interacts with LPAR2 but not other LPA receptors. Interacts with PRKAA2. Interacts with MAGI1. Interacts with SCRIB. In case of infection, interacts with S.typhimurium protein sseI. In terms of processing, phosphorylation at Tyr-55 by SRC is required for enhancement of lysophosphatidic acid-induced cell migration. Tyr-55 is dephosphorylated by PTPN13. In terms of tissue distribution, highly expressed in kidney, stomach, lung, heart and testis. Low expression levels in brain, colon, thymus, pancreas and skin. Not expressed in skeletal muscle.

It localises to the cytoplasm. The protein resides in the cytoskeleton. Its subcellular location is the cell junction. It is found in the focal adhesion. The protein localises to the nucleus. Its function is as follows. Relays signals from the cell surface to the nucleus to weaken adherens junction and promote actin cytoskeleton reorganization and cell invasiveness. Involved in lysophosphatidic acid-induced cell adhesion and migration. Acts as a transcriptional coactivator for NF-kappa-B and JUN, and mediates the transrepression of these transcription factors induced by glucocorticoid receptor. The chain is Thyroid receptor-interacting protein 6 (Trip6) from Mus musculus (Mouse).